Here is a 462-residue protein sequence, read N- to C-terminus: tRNA(Ile)-lysidine synthase (462 aa).

26-31 serves as a coordination point for ATP; that stretch reads SGGVDS.

Belongs to the tRNA(Ile)-lysidine synthase family.

It localises to the cytoplasm. It carries out the reaction cytidine(34) in tRNA(Ile2) + L-lysine + ATP = lysidine(34) in tRNA(Ile2) + AMP + diphosphate + H(+). Functionally, ligates lysine onto the cytidine present at position 34 of the AUA codon-specific tRNA(Ile) that contains the anticodon CAU, in an ATP-dependent manner. Cytidine is converted to lysidine, thus changing the amino acid specificity of the tRNA from methionine to isoleucine. The chain is tRNA(Ile)-lysidine synthase from Enterococcus faecalis (strain ATCC 700802 / V583).